We begin with the raw amino-acid sequence, 123 residues long: Small ribosomal subunit protein uS12 (123 aa).

A 3-methylthioaspartic acid modification is found at Asp89.

This sequence belongs to the universal ribosomal protein uS12 family. Part of the 30S ribosomal subunit. Contacts proteins S8 and S17. May interact with IF1 in the 30S initiation complex.

In terms of biological role, with S4 and S5 plays an important role in translational accuracy. Interacts with and stabilizes bases of the 16S rRNA that are involved in tRNA selection in the A site and with the mRNA backbone. Located at the interface of the 30S and 50S subunits, it traverses the body of the 30S subunit contacting proteins on the other side and probably holding the rRNA structure together. The combined cluster of proteins S8, S12 and S17 appears to hold together the shoulder and platform of the 30S subunit. This is Small ribosomal subunit protein uS12 from Nitrobacter winogradskyi (strain ATCC 25391 / DSM 10237 / CIP 104748 / NCIMB 11846 / Nb-255).